Reading from the N-terminus, the 191-residue chain is MSLISRLRAVVAGDDFLDSDFDELEYDSSDDFENFNRGNKEGSTEMATISQANPFDGRSGFPPSNVIGMPGISTNDSEVSLMEPRSFDEMPRVIQALRERKTVILNLTMMEPDQAQRAVDFVAGGTFAIDGHQERVGESIFLFAPSCVTVTNSFQEEASPSNMSNKGNDLISKETSPAPEPAWGETVATAL.

Polar residues predominate over residues 156-167; that stretch reads EEASPSNMSNKG. A disordered region spans residues 156 to 191; it reads EEASPSNMSNKGNDLISKETSPAPEPAWGETVATAL.

It belongs to the SepF family. Homodimer. Interacts with FtsZ.

It localises to the cytoplasm. In terms of biological role, cell division protein that is part of the divisome complex and is recruited early to the Z-ring. Probably stimulates Z-ring formation, perhaps through the cross-linking of FtsZ protofilaments. Its function overlaps with FtsA. In Prochlorococcus marinus (strain NATL1A), this protein is Cell division protein SepF.